The following is a 430-amino-acid chain: UDP-N-acetylglucosamine 1-carboxyvinyltransferase (430 aa).

Residue 22-23 (KN) coordinates phosphoenolpyruvate. Residue arginine 102 participates in UDP-N-acetyl-alpha-D-glucosamine binding. Cysteine 126 (proton donor) is an active-site residue. Cysteine 126 is subject to 2-(S-cysteinyl)pyruvic acid O-phosphothioketal. Residues 131 to 135 (RPVDL), 172 to 175 (KVSV), aspartate 317, and isoleucine 339 each bind UDP-N-acetyl-alpha-D-glucosamine.

Belongs to the EPSP synthase family. MurA subfamily.

It localises to the cytoplasm. It carries out the reaction phosphoenolpyruvate + UDP-N-acetyl-alpha-D-glucosamine = UDP-N-acetyl-3-O-(1-carboxyvinyl)-alpha-D-glucosamine + phosphate. It functions in the pathway cell wall biogenesis; peptidoglycan biosynthesis. Its function is as follows. Cell wall formation. Adds enolpyruvyl to UDP-N-acetylglucosamine. This Rhizobium etli (strain CIAT 652) protein is UDP-N-acetylglucosamine 1-carboxyvinyltransferase.